Reading from the N-terminus, the 640-residue chain is MCGICCAVSFSVEHFSRDLKEDLLCNLKRRGPDSSKQLLRSTVNYQCLFSGHVLHLRGLLTAQPVEDERGNVFLWNGEIFSGIKVEAEENDTQIMFHYLSSCKNESDILSLFSKVQGPWSFIYYQASSHSLWFGRDFFGRRSLLWHFSNLGKSFCLSSVGTQASGVTDQWQEVPASGIFRIDLKSASISQSVVLKLYPWKYSSGGDDIRECVHNSLTEISADLPTFVLVAANEAKLYLKDPVVPLNMALPQAAFETHCSSISRSPLTRETLRVFLTDGHTKEVVQQFIGVLSTAVKRRVLCLPRDENLAPSEVLKTSNRKANVAVLFSGGIDSMVIAALADHHIPLDEPIDLLNVAFMTKEKTIPVNFNKKGRKQANHCEMPSEEFSKHAAATAAASPGEQLSVPDRVTGRAGLKELQAANPSRIWNFVEINVSLEELQRLRRTRISHLIQPLDTVLDDSIGCAVWFASRGAGWLVTQDGAQPYQSSAKVVLTGIGADEQLAGYSRHQVRFLAHGLEGLNKEIEMELGRISSRNLGRDDRVISDHGKEARFPFLDENVVSFLNSLPVWEKANLTLPRGIGEKLILRLAAVELGLTASALLPKRAMQFGSRIAKMEKNNEKASDKCGRLQIISLENLSVEN.

Cys2 (for GATase activity) is an active-site residue. Residues 2–184 (CGICCAVSFS…ASGIFRIDLK (183 aa)) form the Glutamine amidotransferase type-2 domain. The 317-residue stretch at 286-602 (QFIGVLSTAV…GLTASALLPK (317 aa)) folds into the Asparagine synthetase domain.

In Bos taurus (Bovine), this protein is Asparagine synthetase domain-containing protein 1 (ASNSD1).